The following is a 417-amino-acid chain: Putative competence-damage inducible protein (417 aa).

The protein belongs to the CinA family.

This chain is Putative competence-damage inducible protein, found in Shouchella clausii (strain KSM-K16) (Alkalihalobacillus clausii).